The following is a 255-amino-acid chain: tRNA (guanine-N(7)-)-methyltransferase (255 aa).

The tract at residues 1-29 (MMHDDPNEAGLPPDDAALPDEAADGADEV) is disordered. Positions 17-27 (ALPDEAADGAD) are enriched in acidic residues. 4 residues coordinate S-adenosyl-L-methionine: Glu86, Glu111, Asp138, and Asp161. Asp161 is an active-site residue. Substrate is bound by residues Lys165, Asp197, and 232–235 (TKFE).

This sequence belongs to the class I-like SAM-binding methyltransferase superfamily. TrmB family.

It carries out the reaction guanosine(46) in tRNA + S-adenosyl-L-methionine = N(7)-methylguanosine(46) in tRNA + S-adenosyl-L-homocysteine. Its pathway is tRNA modification; N(7)-methylguanine-tRNA biosynthesis. Its function is as follows. Catalyzes the formation of N(7)-methylguanine at position 46 (m7G46) in tRNA. In Burkholderia ambifaria (strain ATCC BAA-244 / DSM 16087 / CCUG 44356 / LMG 19182 / AMMD) (Burkholderia cepacia (strain AMMD)), this protein is tRNA (guanine-N(7)-)-methyltransferase.